A 428-amino-acid polypeptide reads, in one-letter code: Histidinol dehydrogenase (428 aa).

Tyr127, Gln189, and Asn212 together coordinate NAD(+). Substrate contacts are provided by Ser235, Gln257, and His260. Residues Gln257 and His260 each coordinate Zn(2+). Residues Glu325 and His326 each act as proton acceptor in the active site. Positions 326, 359, 413, and 418 each coordinate substrate. Asp359 is a binding site for Zn(2+). Position 418 (His418) interacts with Zn(2+).

This sequence belongs to the histidinol dehydrogenase family. Zn(2+) is required as a cofactor.

The catalysed reaction is L-histidinol + 2 NAD(+) + H2O = L-histidine + 2 NADH + 3 H(+). It functions in the pathway amino-acid biosynthesis; L-histidine biosynthesis; L-histidine from 5-phospho-alpha-D-ribose 1-diphosphate: step 9/9. In terms of biological role, catalyzes the sequential NAD-dependent oxidations of L-histidinol to L-histidinaldehyde and then to L-histidine. The protein is Histidinol dehydrogenase of Prochlorococcus marinus subsp. pastoris (strain CCMP1986 / NIES-2087 / MED4).